A 426-amino-acid chain; its full sequence is Enolase (426 aa).

Residue Q163 coordinates (2R)-2-phosphoglycerate. The Proton donor role is filled by E205. Mg(2+) contacts are provided by D242, E285, and D312. Residues K337, R366, S367, and K388 each contribute to the (2R)-2-phosphoglycerate site. K337 functions as the Proton acceptor in the catalytic mechanism.

This sequence belongs to the enolase family. It depends on Mg(2+) as a cofactor.

Its subcellular location is the cytoplasm. The protein localises to the secreted. The protein resides in the cell surface. It carries out the reaction (2R)-2-phosphoglycerate = phosphoenolpyruvate + H2O. Its pathway is carbohydrate degradation; glycolysis; pyruvate from D-glyceraldehyde 3-phosphate: step 4/5. Functionally, catalyzes the reversible conversion of 2-phosphoglycerate (2-PG) into phosphoenolpyruvate (PEP). It is essential for the degradation of carbohydrates via glycolysis. The chain is Enolase from Desulfosudis oleivorans (strain DSM 6200 / JCM 39069 / Hxd3) (Desulfococcus oleovorans).